The primary structure comprises 209 residues: Probable GTP-binding protein EngB (209 aa).

Positions 12–203 (INLEIIFAGR…RDRLHEMKRD (192 aa)) constitute an EngB-type G domain. Residues 20–27 (GRSNVGKS), 45–49 (GVTLR), 62–65 (DMPG), 142–145 (NKMD), and 179–181 (ISA) each bind GTP. Positions 27 and 47 each coordinate Mg(2+).

Belongs to the TRAFAC class TrmE-Era-EngA-EngB-Septin-like GTPase superfamily. EngB GTPase family. Requires Mg(2+) as cofactor.

Its function is as follows. Necessary for normal cell division and for the maintenance of normal septation. In Methanosarcina mazei (strain ATCC BAA-159 / DSM 3647 / Goe1 / Go1 / JCM 11833 / OCM 88) (Methanosarcina frisia), this protein is Probable GTP-binding protein EngB.